The following is a 358-amino-acid chain: UDP-N-acetylglucosamine--N-acetylmuramyl-(pentapeptide) pyrophosphoryl-undecaprenol N-acetylglucosamine transferase (358 aa).

UDP-N-acetyl-alpha-D-glucosamine contacts are provided by Ser-196 and Gln-287.

This sequence belongs to the glycosyltransferase 28 family. MurG subfamily.

It localises to the cell membrane. The enzyme catalyses Mur2Ac(oyl-L-Ala-gamma-D-Glu-L-Lys-D-Ala-D-Ala)-di-trans,octa-cis-undecaprenyl diphosphate + UDP-N-acetyl-alpha-D-glucosamine = beta-D-GlcNAc-(1-&gt;4)-Mur2Ac(oyl-L-Ala-gamma-D-Glu-L-Lys-D-Ala-D-Ala)-di-trans,octa-cis-undecaprenyl diphosphate + UDP + H(+). The protein operates within cell wall biogenesis; peptidoglycan biosynthesis. Its function is as follows. Cell wall formation. Catalyzes the transfer of a GlcNAc subunit on undecaprenyl-pyrophosphoryl-MurNAc-pentapeptide (lipid intermediate I) to form undecaprenyl-pyrophosphoryl-MurNAc-(pentapeptide)GlcNAc (lipid intermediate II). The chain is UDP-N-acetylglucosamine--N-acetylmuramyl-(pentapeptide) pyrophosphoryl-undecaprenol N-acetylglucosamine transferase from Streptococcus uberis (strain ATCC BAA-854 / 0140J).